Reading from the N-terminus, the 501-residue chain is Symplectin (501 aa).

Residues 20–287 (PKTDMETREE…SKLLVAEILP (268 aa)) enclose the CN hydrolase domain. E60 acts as the Proton acceptor in catalysis. K163 acts as the Proton donor in catalysis. Residue C196 is the Nucleophile of the active site. At C390 the chain carries S-(coelenterazin-3a-yl)cysteine.

Belongs to the carbon-nitrogen hydrolase superfamily. BTD/VNN family. In terms of tissue distribution, photogenic gland (at protein level).

In terms of biological role, monovalent ion-dependent bioluminescence photoprotein. Displays an emission peak at 470 nm (blue light). Trace amounts of monovalent ion trigger the intramolecular oxidation of the chromophore, didehydrocoelenterazine, with the emission of light. The sequence is that of Symplectin from Sthenoteuthis oualaniensis (Purpleback flying squid).